A 403-amino-acid chain; its full sequence is Glyceraldehyde-3-phosphate dehydrogenase A, chloroplastic (403 aa).

The N-terminal 66 residues, 1-66 (MASSMLSATT…GGPRRAPTEA (66 aa)), are a transit peptide targeting the chloroplast. Residues 77–78 (RI), Asp-102, and Arg-147 contribute to the NADP(+) site. Residues 219–221 (SCT), Thr-250, Arg-265, 278–279 (TG), and Arg-301 each bind D-glyceraldehyde 3-phosphate. The Nucleophile role is filled by Cys-220. Residue Asn-383 coordinates NADP(+).

This sequence belongs to the glyceraldehyde-3-phosphate dehydrogenase family. As to quaternary structure, tetramer of either four A chains (GAPDH 2) or two A and two B chains (GAPDH 1).

It localises to the plastid. The protein localises to the chloroplast. The enzyme catalyses D-glyceraldehyde 3-phosphate + phosphate + NADP(+) = (2R)-3-phospho-glyceroyl phosphate + NADPH + H(+). Its pathway is carbohydrate biosynthesis; Calvin cycle. The sequence is that of Glyceraldehyde-3-phosphate dehydrogenase A, chloroplastic (GAPA) from Zea mays (Maize).